The sequence spans 381 residues: tRNA-specific 2-thiouridylase MnmA (381 aa).

ATP is bound by residues 14–21 and M40; that span reads AMSGGVDS. C108 acts as the Nucleophile in catalysis. A disulfide bridge connects residues C108 and C205. Residue G132 participates in ATP binding. Residues 155–157 are interaction with tRNA; that stretch reads KDQ. C205 serves as the catalytic Cysteine persulfide intermediate. An interaction with tRNA region spans residues 309–310; the sequence is RY.

Belongs to the MnmA/TRMU family.

The protein resides in the cytoplasm. The catalysed reaction is S-sulfanyl-L-cysteinyl-[protein] + uridine(34) in tRNA + AH2 + ATP = 2-thiouridine(34) in tRNA + L-cysteinyl-[protein] + A + AMP + diphosphate + H(+). Functionally, catalyzes the 2-thiolation of uridine at the wobble position (U34) of tRNA, leading to the formation of s(2)U34. In Deinococcus geothermalis (strain DSM 11300 / CIP 105573 / AG-3a), this protein is tRNA-specific 2-thiouridylase MnmA.